Reading from the N-terminus, the 423-residue chain is Putative competence-damage inducible protein (423 aa).

Belongs to the CinA family.

This is Putative competence-damage inducible protein from Streptococcus pyogenes serotype M2 (strain MGAS10270).